A 304-amino-acid polypeptide reads, in one-letter code: Probable 5-dehydro-4-deoxyglucarate dehydratase (304 aa).

This sequence belongs to the DapA family.

It carries out the reaction 5-dehydro-4-deoxy-D-glucarate + H(+) = 2,5-dioxopentanoate + CO2 + H2O. It functions in the pathway carbohydrate acid metabolism; D-glucarate degradation; 2,5-dioxopentanoate from D-glucarate: step 2/2. This chain is Probable 5-dehydro-4-deoxyglucarate dehydratase, found in Arthrobacter sp. (strain FB24).